A 248-amino-acid polypeptide reads, in one-letter code: MSENTTHFGFRTVPEHEKANMVRAVFDSVAGKYDVMNDLMSIGIHRLWKRIAVDLAHVRSGEKVLDLAGGTGDLTALFRKRVGARGFVVLSDINAEMLRRGRDRIIDDGLAESVAYAQIDAEKLPFPHDSFDCISIGFGLRNVTHKDKALNSMYRALKPGGRLIVLEFSEVHNELLRKAYDLYSFKVLPFLGKLVANDAESYRYLAESIRMHPNQEKLKAMMEKAGFERCEYFDLMQGIVAVHRGYKF.

S-adenosyl-L-methionine-binding positions include Thr-71, Asp-92, and 120–121; that span reads DA.

It belongs to the class I-like SAM-binding methyltransferase superfamily. MenG/UbiE family.

It catalyses the reaction a 2-demethylmenaquinol + S-adenosyl-L-methionine = a menaquinol + S-adenosyl-L-homocysteine + H(+). It carries out the reaction a 2-methoxy-6-(all-trans-polyprenyl)benzene-1,4-diol + S-adenosyl-L-methionine = a 5-methoxy-2-methyl-3-(all-trans-polyprenyl)benzene-1,4-diol + S-adenosyl-L-homocysteine + H(+). The protein operates within quinol/quinone metabolism; menaquinone biosynthesis; menaquinol from 1,4-dihydroxy-2-naphthoate: step 2/2. It participates in cofactor biosynthesis; ubiquinone biosynthesis. Methyltransferase required for the conversion of demethylmenaquinol (DMKH2) to menaquinol (MKH2) and the conversion of 2-polyprenyl-6-methoxy-1,4-benzoquinol (DDMQH2) to 2-polyprenyl-3-methyl-6-methoxy-1,4-benzoquinol (DMQH2). The polypeptide is Ubiquinone/menaquinone biosynthesis C-methyltransferase UbiE (Methylococcus capsulatus (strain ATCC 33009 / NCIMB 11132 / Bath)).